The following is a 126-amino-acid chain: H2B.U histone 2 (126 aa).

The tract at residues 1–35 (MPEPSRSTPAPKKGSKKAITKAQKKDGKKRKRGRK) is disordered. Proline 2 bears the N-acetylproline mark. An ADP-ribosyl glutamic acid modification is found at glutamate 3. Serine 7 carries the ADP-ribosylserine modification. Residue lysine 12 is modified to N6-(beta-hydroxybutyryl)lysine; alternate. An N6-acetyllysine; alternate mark is found at lysine 12 and lysine 13. Lysine 12 and lysine 13 each carry N6-crotonyllysine; alternate. Position 12 is an N6-lactoyllysine; alternate (lysine 12). Lysine 13 carries the post-translational modification N6-(2-hydroxyisobutyryl)lysine; alternate. Position 15 is a phosphoserine; by STK4/MST1 (serine 15). An N6-acetyllysine; alternate mark is found at lysine 16, lysine 17, lysine 21, and lysine 24. Residues lysine 16, lysine 17, lysine 21, and lysine 24 each carry the N6-crotonyllysine; alternate modification. Residues lysine 16, lysine 17, lysine 21, and lysine 24 each carry the N6-lactoyllysine; alternate modification. Lysine 17 is modified (N6-glutaryllysine; alternate). Lysine 21 is subject to N6-(beta-hydroxybutyryl)lysine; alternate. Lysine 21 and lysine 24 each carry N6-(2-hydroxyisobutyryl)lysine; alternate. An N6-butyryllysine; alternate modification is found at lysine 21. Lysine 21 participates in a covalent cross-link: Glycyl lysine isopeptide (Lys-Gly) (interchain with G-Cter in SUMO2); alternate. The residue at position 25 (lysine 25) is an N6-(2-hydroxyisobutyryl)lysine. Position 35 is an N6-(beta-hydroxybutyryl)lysine; alternate (lysine 35). Residue lysine 35 is modified to N6-crotonyllysine; alternate. Lysine 35 is modified (N6-(2-hydroxyisobutyryl)lysine; alternate). The residue at position 35 (lysine 35) is an N6-glutaryllysine; alternate. At lysine 35 the chain carries N6-succinyllysine; alternate. Residue lysine 35 forms a Glycyl lysine isopeptide (Lys-Gly) (interchain with G-Cter in ubiquitin); alternate linkage. Glutamate 36 bears the PolyADP-ribosyl glutamic acid mark. Serine 37 carries the phosphoserine; by AMPK modification. The residue at position 44 (lysine 44) is an N6-lactoyllysine; alternate. Lysine 44, lysine 47, and lysine 58 each carry N6-(2-hydroxyisobutyryl)lysine; alternate. 2 positions are modified to N6-glutaryllysine; alternate: lysine 44 and lysine 47. Lysine 47 is subject to N6-methyllysine; alternate. Lysine 58 carries the post-translational modification N6,N6-dimethyllysine; alternate. Arginine 80 carries the post-translational modification Dimethylated arginine. Lysine 86 is subject to N6-acetyllysine; alternate. Lysine 86 is modified (N6-lactoyllysine; alternate). Lysine 86 carries the post-translational modification N6-(2-hydroxyisobutyryl)lysine; alternate. Lysine 86 is modified (N6,N6,N6-trimethyllysine; alternate). An omega-N-methylarginine mark is found at arginine 87 and arginine 93. Position 109 is an N6-(beta-hydroxybutyryl)lysine; alternate (lysine 109). Lysine 109 is subject to N6-lactoyllysine; alternate. Lysine 109 is subject to N6-(2-hydroxyisobutyryl)lysine; alternate. N6-glutaryllysine; alternate is present on lysine 109. Lysine 109 bears the N6-methyllysine; alternate mark. O-linked (GlcNAc) serine glycosylation is present at serine 113. A Phosphothreonine modification is found at threonine 116. Residue lysine 117 is modified to N6-(beta-hydroxybutyryl)lysine; alternate. Lysine 117 and lysine 121 each carry N6-lactoyllysine; alternate. Lysine 117 and lysine 121 each carry N6-(2-hydroxyisobutyryl)lysine; alternate. N6-glutaryllysine; alternate is present on residues lysine 117 and lysine 121. An N6-succinyllysine; alternate mark is found at lysine 117 and lysine 121. Lysine 117 is modified (N6-methylated lysine; alternate). Lysine 121 participates in a covalent cross-link: Glycyl lysine isopeptide (Lys-Gly) (interchain with G-Cter in ubiquitin); alternate.

The protein belongs to the histone H2B family. In terms of assembly, the nucleosome is a histone octamer containing two molecules each of H2A, H2B, H3 and H4 assembled in one H3-H4 heterotetramer and two H2A-H2B heterodimers. The octamer wraps approximately 147 bp of DNA. Post-translationally, monoubiquitination at Lys-35 (H2BK34Ub) by the MSL1/MSL2 dimer is required for histone H3 'Lys-4' (H3K4me) and 'Lys-79' (H3K79me) methylation and transcription activation at specific gene loci, such as HOXA9 and MEIS1 loci. Similarly, monoubiquitination at Lys-121 (H2BK120Ub) by the RNF20/40 complex gives a specific tag for epigenetic transcriptional activation and is also prerequisite for histone H3 'Lys-4' and 'Lys-79' methylation. It also functions cooperatively with the FACT dimer to stimulate elongation by RNA polymerase II. H2BK120Ub also acts as a regulator of mRNA splicing: deubiquitination by USP49 is required for efficient cotranscriptional splicing of a large set of exons. Phosphorylated on Ser-15 (H2BS14ph) by STK4/MST1 during apoptosis; which facilitates apoptotic chromatin condensation. Also phosphorylated on Ser-15 in response to DNA double strand breaks (DSBs), and in correlation with somatic hypermutation and immunoglobulin class-switch recombination. Phosphorylation at Ser-37 (H2BS36ph) by AMPK in response to stress promotes transcription. In terms of processing, glcNAcylation at Ser-113 promotes monoubiquitination of Lys-121. It fluctuates in response to extracellular glucose, and associates with transcribed genes. Post-translationally, ADP-ribosylated by PARP1 or PARP2 on Ser-7 (H2BS6ADPr) in response to DNA damage. H2BS6ADPr promotes recruitment of CHD1L. Mono-ADP-ribosylated on Glu-3 (H2BE2ADPr) by PARP3 in response to single-strand breaks. Poly ADP-ribosylation on Glu-36 (H2BE35ADPr) by PARP1 regulates adipogenesis: it inhibits phosphorylation at Ser-37 (H2BS36ph), thereby blocking expression of pro-adipogenetic genes. Crotonylation (Kcr) is specifically present in male germ cells and marks testis-specific genes in post-meiotic cells, including X-linked genes that escape sex chromosome inactivation in haploid cells. Crotonylation marks active promoters and enhancers and confers resistance to transcriptional repressors. It is also associated with post-meiotically activated genes on autosomes. In terms of processing, hydroxybutyrylation of histones is induced by starvation. Post-translationally, lactylated in macrophages by EP300/P300 by using lactoyl-CoA directly derived from endogenous or exogenous lactate, leading to stimulates gene transcription.

It localises to the nucleus. It is found in the chromosome. In terms of biological role, core component of nucleosome. Nucleosomes wrap and compact DNA into chromatin, limiting DNA accessibility to the cellular machineries which require DNA as a template. Histones thereby play a central role in transcription regulation, DNA repair, DNA replication and chromosomal stability. DNA accessibility is regulated via a complex set of post-translational modifications of histones, also called histone code, and nucleosome remodeling. The protein is H2B.U histone 2 of Mus musculus (Mouse).